A 194-amino-acid chain; its full sequence is Ion-translocating oxidoreductase complex subunit A (194 aa).

6 consecutive transmembrane segments (helical) span residues 4 to 24, 39 to 59, 72 to 92, 102 to 122, 135 to 155, and 172 to 192; these read LALI…QFLG, IGLS…SHIL, LRTI…EMLV, VLGI…VALL, TTQG…FAAL, and AIGM…SGLV.

This sequence belongs to the NqrDE/RnfAE family. The complex is composed of six subunits: RnfA, RnfB, RnfC, RnfD, RnfE and RnfG.

Its subcellular location is the cell inner membrane. Functionally, part of a membrane-bound complex that couples electron transfer with translocation of ions across the membrane. The polypeptide is Ion-translocating oxidoreductase complex subunit A (Pseudomonas aeruginosa (strain LESB58)).